Consider the following 701-residue polypeptide: Polyribonucleotide nucleotidyltransferase (701 aa).

The Mg(2+) site is built by Asp-487 and Asp-493. The region spanning 554–613 (PTMIAMKIDTDKIRDVIGKGGATIRAICEETKASIDIEDDGSIKIFGESKEAAEAARQRV) is the KH domain. The region spanning 623–691 (GKIYIGKVER…NRGRIKLSIK (69 aa)) is the S1 motif domain.

It belongs to the polyribonucleotide nucleotidyltransferase family. Component of the RNA degradosome, which is a multiprotein complex involved in RNA processing and mRNA degradation. The cofactor is Mg(2+).

It localises to the cytoplasm. It catalyses the reaction RNA(n+1) + phosphate = RNA(n) + a ribonucleoside 5'-diphosphate. Involved in mRNA degradation. Catalyzes the phosphorolysis of single-stranded polyribonucleotides processively in the 3'- to 5'-direction. This chain is Polyribonucleotide nucleotidyltransferase, found in Pseudomonas syringae pv. syringae (strain B728a).